The chain runs to 217 residues: Small ribosomal subunit protein uS3c (217 aa).

Residues 47–118 (IQKHVKSVSN…NLRVTLTGVI (72 aa)) enclose the KH type-2 domain.

The protein belongs to the universal ribosomal protein uS3 family. As to quaternary structure, part of the 30S ribosomal subunit.

The protein localises to the plastid. It localises to the chloroplast. In Adiantum capillus-veneris (Maidenhair fern), this protein is Small ribosomal subunit protein uS3c (rps3).